The sequence spans 469 residues: Cholesterol 7-desaturase nvd (469 aa).

Residues 1–25 (MASFCASKFLPGLLMLGLGLAVALA) form the signal peptide. Residues 58-78 (NFVASQTLLTLTIFGVASFIL) traverse the membrane as a helical segment. The region spanning 132-238 (IPLVASQDLV…VIEQNGFVLV (107 aa)) is the Rieske domain. Cys172, His174, Cys192, and His195 together coordinate [2Fe-2S] cluster.

The protein belongs to the cholesterol 7-desaturase family. It depends on [2Fe-2S] cluster as a cofactor.

It localises to the membrane. It carries out the reaction cholesterol + NADPH + O2 + H(+) = 7-dehydrocholesterol + NADP(+) + 2 H2O. The catalysed reaction is cholesterol + NADH + O2 + H(+) = 7-dehydrocholesterol + NAD(+) + 2 H2O. Its pathway is steroid hormone biosynthesis; dafachronic acid biosynthesis. Its function is as follows. Catalyzes the production of 7-dehydrocholesterol (7-DHC or cholesta-5,7-dien-3beta-ol) by inserting a double bond (desaturating) at the C7-C8 single bond of cholesterol. Essential regulator of steroid biosynthesis as this reaction is the first step in the synthesis of the steroid hormone Delta(7)-dafachronic acid. The polypeptide is Cholesterol 7-desaturase nvd (Hemicentrotus pulcherrimus (Sea urchin)).